Consider the following 419-residue polypeptide: L-rhamnose isomerase (419 aa).

Mn(2+)-binding residues include His-262, Asp-294, and Asp-296.

This sequence belongs to the rhamnose isomerase family. Homotetramer. Mn(2+) is required as a cofactor.

It localises to the cytoplasm. The enzyme catalyses L-rhamnopyranose = L-rhamnulose. It functions in the pathway carbohydrate degradation; L-rhamnose degradation; glycerone phosphate from L-rhamnose: step 1/3. Functionally, catalyzes the interconversion of L-rhamnose and L-rhamnulose. This is L-rhamnose isomerase from Salmonella enteritidis PT4 (strain P125109).